Reading from the N-terminus, the 438-residue chain is 23S rRNA (uracil(1939)-C(5))-methyltransferase RlmD (438 aa).

A TRAM domain is found at 10 to 68 (RVTTRQTITVKVHDLDSFGQGVAHHNGKALFVQGALPDEVAEVSIIEDKRHFSRGVATR). [4Fe-4S] cluster-binding residues include Cys81, Cys87, Cys90, and Cys168. S-adenosyl-L-methionine is bound by residues Gln271, Phe300, Asn305, Glu321, Asn348, and Asp369. Cys395 acts as the Nucleophile in catalysis.

The protein belongs to the class I-like SAM-binding methyltransferase superfamily. RNA M5U methyltransferase family. RlmD subfamily.

The enzyme catalyses uridine(1939) in 23S rRNA + S-adenosyl-L-methionine = 5-methyluridine(1939) in 23S rRNA + S-adenosyl-L-homocysteine + H(+). In terms of biological role, catalyzes the formation of 5-methyl-uridine at position 1939 (m5U1939) in 23S rRNA. In Erwinia tasmaniensis (strain DSM 17950 / CFBP 7177 / CIP 109463 / NCPPB 4357 / Et1/99), this protein is 23S rRNA (uracil(1939)-C(5))-methyltransferase RlmD.